Here is a 460-residue protein sequence, read N- to C-terminus: Heme sensor protein HssS (460 aa).

2 helical membrane passes run 11-31 (IYTI…TNII) and 164-184 (IFLA…VISS). An HAMP domain is found at 186-238 (YAIIKPIQQLKRATERLMHGNFDEVIHVTRKDEFGTLQYRFDKMRLSLKQLDD). Positions 246 to 456 (NVSHEIKTPL…TFTITFKKVP (211 aa)) constitute a Histidine kinase domain. The residue at position 249 (histidine 249) is a Phosphohistidine; by autocatalysis.

Post-translationally, autophosphorylated.

It is found in the cell membrane. It catalyses the reaction ATP + protein L-histidine = ADP + protein N-phospho-L-histidine.. Member of the two-component regulatory system HssS/HssR involved in intracellular heme homeostasis and tempering of staphylococcal virulence. HssS functions as a heme sensor histidine kinase which is autophosphorylated at a histidine residue and transfers its phosphate group to an aspartate residue of HssR. HssR/HssS activates the expression of hrtAB, an efflux pump, in response to extracellular heme, hemin, hemoglobin or blood. The protein is Heme sensor protein HssS (hssS) of Staphylococcus saprophyticus subsp. saprophyticus (strain ATCC 15305 / DSM 20229 / NCIMB 8711 / NCTC 7292 / S-41).